The chain runs to 156 residues: MGFSDAGIYLSDPNNLCQTELGFFHEPSLGFSDQSDPQNEFHITPPIYQELQDQDLEPKSQETNNCSRKEGATVKKEEEEEDDYCKTPTRSDQILSAMPRICPPAPRKPKRVPSRSLKVRNSYRSKRMIILNVSREIDCLFNPTSLCNKIKKARYI.

The disordered stretch occupies residues 52 to 90 (QDQDLEPKSQETNNCSRKEGATVKKEEEEEDDYCKTPTR). The segment covering 67-77 (SRKEGATVKKE) has biased composition (basic and acidic residues).

Probable cyclin-dependent protein kinase (CDK) inhibitor that functions as a repressor of mitosis in the endoreduplication cell cycle. This is Cyclin-dependent protein kinase inhibitor SMR10 from Arabidopsis thaliana (Mouse-ear cress).